We begin with the raw amino-acid sequence, 37 residues long: Potassium channel toxin alpha-KTx 1.3 (37 aa).

Q1 bears the Pyrrolidone carboxylic acid mark. Disulfide bonds link C7-C28, C13-C33, and C17-C35. Residues 26-33 (GKCMGKKC) are interaction with Ca(2+)-activated K(+) channels.

Belongs to the short scorpion toxin superfamily. Potassium channel inhibitor family. Alpha-KTx 01 subfamily. In terms of tissue distribution, expressed by the venom gland.

It is found in the secreted. Blocks selectively the high conductance calcium-activated (maxi-K) potassium channels (KCa1.1/KCNMA1). The protein is Potassium channel toxin alpha-KTx 1.3 of Hottentotta tamulus (Eastern Indian scorpion).